We begin with the raw amino-acid sequence, 907 residues long: Translation initiation factor IF-2 (907 aa).

3 stretches are compositionally biased toward basic and acidic residues: residues 223–235 (LAQR…KRAA), 251–263 (VAKE…EKNA), and 270–281 (GGKDWNDSDGKK). A disordered region spans residues 223-320 (LAQRRQEEAK…ENQQHAFTAP (98 aa)). A tr-type G domain is found at 407 to 576 (PRPPVVTVMG…LLQAEVLELK (170 aa)). Positions 416–423 (GHVDHGKT) are G1. 416-423 (GHVDHGKT) is a GTP binding site. A G2 region spans residues 441–445 (GITQH). A G3 region spans residues 462–465 (DTPG). Residues 462–466 (DTPGH) and 516–519 (NKID) each bind GTP. A G4 region spans residues 516-519 (NKID). Residues 552–554 (SAK) form a G5 region.

The protein belongs to the TRAFAC class translation factor GTPase superfamily. Classic translation factor GTPase family. IF-2 subfamily.

It is found in the cytoplasm. In terms of biological role, one of the essential components for the initiation of protein synthesis. Protects formylmethionyl-tRNA from spontaneous hydrolysis and promotes its binding to the 30S ribosomal subunits. Also involved in the hydrolysis of GTP during the formation of the 70S ribosomal complex. The protein is Translation initiation factor IF-2 of Methylobacillus flagellatus (strain ATCC 51484 / DSM 6875 / VKM B-1610 / KT).